The primary structure comprises 328 residues: PDZ and LIM domain protein 1 (328 aa).

Thr2 is modified (N-acetylthreonine). Positions 3 to 85 (TLQIVLQGPG…NMTLTVARSE (83 aa)) constitute a PDZ domain. Phosphoserine is present on residues Ser90 and Ser130. Tyr144 bears the Phosphotyrosine mark. Positions 257–316 (PMCDKCGTGIVGVFVKLRERHRHPECYVCTDCGTNLKQKGHFFVEDQIYCEKHARERVTP) constitute an LIM zinc-binding domain. Positions 259, 262, 279, 282, 285, 288, 306, and 309 each coordinate Zn(2+). Thr315 bears the Phosphothreonine mark. A Phosphotyrosine modification is found at Tyr320.

As to quaternary structure, interacts with ACTN1, ACTN2 and ACTN4. Interacts with PDLIM4.

The protein localises to the cytoplasm. It is found in the cytoskeleton. It localises to the myofibril. The protein resides in the sarcomere. Its subcellular location is the z line. Functionally, cytoskeletal protein that may act as an adapter that brings other proteins (like kinases) to the cytoskeleton. Involved in assembly, disassembly and directioning of stress fibers in fibroblasts. Required for the localization of ACTN1 and PALLD to stress fibers. Required for cell migration and in maintaining cell polarity of fibroblasts. This chain is PDZ and LIM domain protein 1 (PDLIM1), found in Bos taurus (Bovine).